Reading from the N-terminus, the 160-residue chain is Transcription elongation factor GreB (160 aa).

This sequence belongs to the GreA/GreB family. GreB subfamily.

In terms of biological role, necessary for efficient RNA polymerase transcription elongation past template-encoded arresting sites. The arresting sites in DNA have the property of trapping a certain fraction of elongating RNA polymerases that pass through, resulting in locked ternary complexes. Cleavage of the nascent transcript by cleavage factors such as GreA or GreB allows the resumption of elongation from the new 3'terminus. GreB releases sequences of up to 9 nucleotides in length. The protein is Transcription elongation factor GreB of Vibrio vulnificus (strain YJ016).